The chain runs to 259 residues: Global transcriptional regulator CodY (259 aa).

Positions 1–155 (MALLQKTRII…GATVVGMEIL (155 aa)) are GAF domain. A DNA-binding region (H-T-H motif) is located at residues 203 to 222 (ASKIADRVGITRSVIVNALR). Ser215 carries the phosphoserine modification.

This sequence belongs to the CodY family.

The protein resides in the cytoplasm. In terms of biological role, DNA-binding global transcriptional regulator which is involved in the adaptive response to starvation and acts by directly or indirectly controlling the expression of numerous genes in response to nutrient availability. During rapid exponential growth, CodY is highly active and represses genes whose products allow adaptation to nutrient depletion. This is Global transcriptional regulator CodY from Bacillus velezensis (strain DSM 23117 / BGSC 10A6 / LMG 26770 / FZB42) (Bacillus amyloliquefaciens subsp. plantarum).